A 490-amino-acid polypeptide reads, in one-letter code: DENN domain-containing protein 11 (490 aa).

Residues 1 to 86 (MVEQSDRAPL…GGDALAEEDE (86 aa)) are disordered. Positions 19 to 221 (AELAPSVPSP…QLQCPGQYSP (203 aa)) constitute a uDENN domain. Polar residues-rich tracts occupy residues 30–43 (TGDSLQSGLSSYPT) and 52–61 (TLNTSPTRPS). The region spanning 249–397 (LAPIVNRCMH…LNSADREKYR (149 aa)) is the cDENN domain. The dDENN domain occupies 399-490 (LCEQRQLLLY…MLVIDNPCCP (92 aa)).

This sequence belongs to the DENND11 family.

In terms of biological role, probable guanine nucleotide exchange factor (GEF). May promote the exchange of GDP to GTP, converting inactive GDP-bound small GTPases into their active GTP-bound form. The polypeptide is DENN domain-containing protein 11 (dennd11) (Danio rerio (Zebrafish)).